Here is a 260-residue protein sequence, read N- to C-terminus: Lysine/arginine/ornithine-binding periplasmic protein (260 aa).

Positions 1 to 22 (MKKSILALSLLVGLSTAASSYA) are cleaved as a signal peptide. D33 contacts L-arginine. Position 33 (D33) interacts with L-lysine. D33 is a binding site for L-ornithine. C60 and C67 are oxidised to a cystine. L-arginine is bound by residues S91, S92, S94, R99, T143, and D183. The L-ornithine site is built by S91, S92, S94, R99, T143, and D183. 4 residues coordinate L-lysine: S92, S94, R99, and T143.

The protein belongs to the bacterial solute-binding protein 3 family. In terms of assembly, the complex is composed of two ATP-binding proteins (HisP), two transmembrane proteins (HisM and HisQ) and a solute-binding protein (ArgT).

It is found in the periplasm. Its function is as follows. Part of the ABC transporter complex HisPMQ-ArgT involved in lysine/arginine/ornithine transport. Binds lysine, arginine and ornithine. Stimulates ATPase activity of HisP. This is Lysine/arginine/ornithine-binding periplasmic protein (argT) from Escherichia coli (strain K12).